The following is a 161-amino-acid chain: Crossover junction endodeoxyribonuclease RuvC (161 aa).

Catalysis depends on residues Asp9, Glu69, and His144. Mg(2+) contacts are provided by Asp9, Glu69, and His144.

It belongs to the RuvC family. In terms of assembly, homodimer which binds Holliday junction (HJ) DNA. The HJ becomes 2-fold symmetrical on binding to RuvC with unstacked arms; it has a different conformation from HJ DNA in complex with RuvA. In the full resolvosome a probable DNA-RuvA(4)-RuvB(12)-RuvC(2) complex forms which resolves the HJ. Requires Mg(2+) as cofactor.

The protein localises to the cytoplasm. The enzyme catalyses Endonucleolytic cleavage at a junction such as a reciprocal single-stranded crossover between two homologous DNA duplexes (Holliday junction).. Functionally, the RuvA-RuvB-RuvC complex processes Holliday junction (HJ) DNA during genetic recombination and DNA repair. Endonuclease that resolves HJ intermediates. Cleaves cruciform DNA by making single-stranded nicks across the HJ at symmetrical positions within the homologous arms, yielding a 5'-phosphate and a 3'-hydroxyl group; requires a central core of homology in the junction. The consensus cleavage sequence is 5'-(A/T)TT(C/G)-3'. Cleavage occurs on the 3'-side of the TT dinucleotide at the point of strand exchange. HJ branch migration catalyzed by RuvA-RuvB allows RuvC to scan DNA until it finds its consensus sequence, where it cleaves and resolves the cruciform DNA. The polypeptide is Crossover junction endodeoxyribonuclease RuvC (Borrelia turicatae (strain 91E135)).